The primary structure comprises 276 residues: Small ribosomal subunit protein uS3 (276 aa).

A KH type-2 domain is found at 39–110 (IRRETMKFLK…KINIKIKEIK (72 aa)).

The protein belongs to the universal ribosomal protein uS3 family. Part of the 30S ribosomal subunit. Forms a tight complex with proteins S10 and S14.

Binds the lower part of the 30S subunit head. Binds mRNA in the 70S ribosome, positioning it for translation. This Borrelia recurrentis (strain A1) protein is Small ribosomal subunit protein uS3.